The chain runs to 1248 residues: Bifunctional autolysin (1248 aa).

The signal sequence occupies residues 1–29 (MAKKFNYKLPSMVALTLVGSAVTAHQVQA). Positions 103-134 (GDTRANQSATTNNTQPVAKSTSTTAPKTNTNV) are disordered. Residues 191–767 (ASAQPRSVAA…AVAQPKTAVK (577 aa)) form an N-acetylmuramoyl-L-alanine amidase region. 7 GW domains span residues 435 to 509 (TVAA…YNTA), 511 to 585 (SPVN…DTAK), 604 to 678 (TVSS…YNNA), 680 to 754 (SPVN…VPAA), 776 to 851 (TTQT…VQNL), 853 to 928 (KEVK…APTA), and 935 to 1009 (AAKD…KELI). The segment at 768–1248 (AYTVTKPQTT…GKYFDIPQYK (481 aa)) is endo-beta-N-acetylglucosaminidase.

The protein in the N-terminal section; belongs to the N-acetylmuramoyl-L-alanine amidase 2 family. In the C-terminal section; belongs to the glycosyl hydrolase 73 family. As to quaternary structure, oligomer; forms a ring structure at the cell surface which is important for efficient partitioning of daughter cells after cell division. Undergoes proteolytic processing to generate the two extracellular lytic enzymes, probably at the septal region on the cell surface.

It is found in the secreted. It catalyses the reaction Hydrolyzes the link between N-acetylmuramoyl residues and L-amino acid residues in certain cell-wall glycopeptides.. The catalysed reaction is an N(4)-(oligosaccharide-(1-&gt;3)-[oligosaccharide-(1-&gt;6)]-beta-D-Man-(1-&gt;4)-beta-D-GlcNAc-(1-&gt;4)-alpha-D-GlcNAc)-L-asparaginyl-[protein] + H2O = an oligosaccharide-(1-&gt;3)-[oligosaccharide-(1-&gt;6)]-beta-D-Man-(1-&gt;4)-D-GlcNAc + N(4)-(N-acetyl-beta-D-glucosaminyl)-L-asparaginyl-[protein]. In terms of biological role, endohydrolysis of the di-N-acetylchitobiosyl unit in high-mannose glycopeptides and glycoproteins containing the -[(Man)5(GlcNAc)2]-Asn structure. One N-acetyl-D-glucosamine residue remains attached to the protein; the rest of the oligosaccharide is released intact. Cleaves the peptidoglycan connecting the daughter cells at the end of the cell division cycle, resulting in the separation of the two newly divided cells. Acts as an autolysin in penicillin-induced lysis. The protein is Bifunctional autolysin (atl) of Staphylococcus aureus (strain Mu50 / ATCC 700699).